Reading from the N-terminus, the 315-residue chain is Biotin synthase (315 aa).

Positions 39 to 266 (NSLQFATLLS…KSAIRLTAGR (228 aa)) constitute a Radical SAM core domain. C54, C58, and C61 together coordinate [4Fe-4S] cluster. [2Fe-2S] cluster is bound by residues C98, C129, C189, and R261.

The protein belongs to the radical SAM superfamily. Biotin synthase family. In terms of assembly, homodimer. [4Fe-4S] cluster serves as cofactor. It depends on [2Fe-2S] cluster as a cofactor.

It carries out the reaction (4R,5S)-dethiobiotin + (sulfur carrier)-SH + 2 reduced [2Fe-2S]-[ferredoxin] + 2 S-adenosyl-L-methionine = (sulfur carrier)-H + biotin + 2 5'-deoxyadenosine + 2 L-methionine + 2 oxidized [2Fe-2S]-[ferredoxin]. It functions in the pathway cofactor biosynthesis; biotin biosynthesis; biotin from 7,8-diaminononanoate: step 2/2. Its function is as follows. Catalyzes the conversion of dethiobiotin (DTB) to biotin by the insertion of a sulfur atom into dethiobiotin via a radical-based mechanism. The protein is Biotin synthase of Legionella pneumophila (strain Corby).